Consider the following 521-residue polypeptide: Occludin (521 aa).

Residues M1–R66 lie on the Cytoplasmic side of the membrane. The MARVEL domain maps to S60–R268. Residues I67–W89 traverse the membrane as a helical segment. At D90–R134 the chain is on the extracellular side. A helical membrane pass occupies residues A135 to V159. The Cytoplasmic portion of the chain corresponds to I160–R169. The helical transmembrane segment at Y170–M194 threads the bilayer. Over G195–E242 the chain is Extracellular. C215 and C236 are joined by a disulfide. A helical transmembrane segment spans residues A243 to V264. Over K265–T521 the chain is Cytoplasmic. Residue S301 is modified to Phosphoserine. The tract at residues S301–S407 is disordered. The residue at position 304 (T304) is a Phosphothreonine. S312, S320, and S339 each carry phosphoserine. Y367 is subject to Phosphotyrosine. S368 and S369 each carry phosphoserine. A compositionally biased stretch (basic residues) spans A380–P389. The span at K390 to T399 shows a compositional bias: basic and acidic residues. Phosphotyrosine is present on residues Y397 and Y401. A phosphothreonine; by PKC/PRKCH mark is found at T402 and T403. At S407 the chain carries Phosphoserine. Residues E413–T521 form the OCEL domain. The stretch at S424–G488 forms a coiled coil. Position 489 is a phosphoserine (S489).

This sequence belongs to the ELL/occludin family. Interacts with TJP1/ZO1. Interacts with VAPA. Interacts with CLDN1, CLDN6, CLDN9, CLDN11, CLDN12 and CLDN17. Interacts with PLSCR1. Interacts with LSR, ILDR1 and ILDR2. Interacts with TJP2/ZO2. Post-translationally, dephosphorylated by PTPRJ. Less-phosphorylated forms are found in basolateral membrane, cytosol and tight junction. More-heavily phosphorylated forms are concentrated exclusively in tight junction. As to expression, localized at tight junctions of both epithelial and endothelial cells.

It localises to the cell membrane. The protein resides in the cell junction. Its subcellular location is the tight junction. In terms of biological role, may play a role in the formation and regulation of the tight junction (TJ) paracellular permeability barrier. Interacts with ZO-1. The protein is Occludin (OCLN) of Canis lupus familiaris (Dog).